Reading from the N-terminus, the 142-residue chain is Hemoglobin A subunit alpha-1 (142 aa).

The region spanning Val2 to Arg142 is the Globin domain. His59 provides a ligand contact to O2. Heme b is bound at residue His88.

This sequence belongs to the globin family. In terms of assembly, tetramer of alpha-1, alpha-2 and two identical beta chains. Red blood cells.

In terms of biological role, involved in oxygen transport from the lung to the various peripheral tissues. The polypeptide is Hemoglobin A subunit alpha-1 (Aldabrachelys gigantea (Aldabra giant tortoise)).